The following is a 403-amino-acid chain: Phosphopentomutase (403 aa).

Mn(2+) contacts are provided by Asp13, Asp298, His303, Asp339, His340, and His351.

The protein belongs to the phosphopentomutase family. The cofactor is Mn(2+).

It localises to the cytoplasm. It carries out the reaction 2-deoxy-alpha-D-ribose 1-phosphate = 2-deoxy-D-ribose 5-phosphate. The enzyme catalyses alpha-D-ribose 1-phosphate = D-ribose 5-phosphate. It functions in the pathway carbohydrate degradation; 2-deoxy-D-ribose 1-phosphate degradation; D-glyceraldehyde 3-phosphate and acetaldehyde from 2-deoxy-alpha-D-ribose 1-phosphate: step 1/2. Isomerase that catalyzes the conversion of deoxy-ribose 1-phosphate (dRib-1-P) and ribose 1-phosphate (Rib-1-P) to deoxy-ribose 5-phosphate (dRib-5-P) and ribose 5-phosphate (Rib-5-P), respectively. This is Phosphopentomutase from Streptococcus equi subsp. zooepidemicus (strain MGCS10565).